Reading from the N-terminus, the 208-residue chain is uncharacterized protein (208 aa).

Positions 118-134 (QYPNQYQQQPQQQQPGY) are enriched in low complexity. A disordered region spans residues 118–208 (QYPNQYQQQP…HKKEKNEIKE (91 aa)). Positions 138–175 (NYNQPPVQLNKQAYDNYQQNDYKSNNQPNLAKENNISN) are enriched in polar residues. Basic residues predominate over residues 187–201 (KKEKKHSFFSKLHKK).

This is an uncharacterized protein from Dictyostelium discoideum (Social amoeba).